Consider the following 141-residue polypeptide: Nucleoside diphosphate kinase (141 aa).

Residues K9, F57, R85, T91, R102, and N112 each coordinate ATP. Catalysis depends on H115, which acts as the Pros-phosphohistidine intermediate.

This sequence belongs to the NDK family. Homotetramer. It depends on Mg(2+) as a cofactor.

Its subcellular location is the cytoplasm. It carries out the reaction a 2'-deoxyribonucleoside 5'-diphosphate + ATP = a 2'-deoxyribonucleoside 5'-triphosphate + ADP. The catalysed reaction is a ribonucleoside 5'-diphosphate + ATP = a ribonucleoside 5'-triphosphate + ADP. Its function is as follows. Major role in the synthesis of nucleoside triphosphates other than ATP. The ATP gamma phosphate is transferred to the NDP beta phosphate via a ping-pong mechanism, using a phosphorylated active-site intermediate. This Chlamydia felis (strain Fe/C-56) (Chlamydophila felis) protein is Nucleoside diphosphate kinase.